A 127-amino-acid polypeptide reads, in one-letter code: MADSRDDLAESLQNLFTSVSSMVKSELQGTNNHLDLLEKMNLRVASEYDDMGDVAAGLRVFAEQMKSKSGGLDEFVGQMDAIEKQVSEFEAVISVLDRYVSVLESKIRAEYRHPHHQRRSNDSVVTD.

Belongs to the BLOC1S2 family. As to quaternary structure, component of the biogenesis of lysosome-related organelles complex-1 (BLOC-1). Interacts with BLOS1 and SNX1.

The protein localises to the cytoplasm. It localises to the endosome. Component of the biogenesis of lysosome-related organelles complex-1 (BLOC-1), a complex that mediates the vacuolar degradative transport via the intracellular vesicle trafficking from the endosome to the vacuole. The chain is Biogenesis of lysosome-related organelles complex 1 subunit 2 (BLOS2) from Arabidopsis thaliana (Mouse-ear cress).